Reading from the N-terminus, the 468-residue chain is Nuclear distribution protein PAC1-2 (468 aa).

In terms of domain architecture, LisH spans 13 to 45; it reads QAEELHKSIIAYLTSLNLATTANTLRAELNLPE. Positions 66–92 form a coiled coil; the sequence is SVIRLQKKVLDLQAENAHLKNEIENAG. 8 WD repeats span residues 118–159, 161–201, 205–251, 254–293, 298–358, 360–399, 404–429, and 430–468; these read GHRL…RTLK, HTKA…KNIR, GHDH…CVKT, GHND…PECR, GHEN…IKVL, GHDN…KCVQ, MFDG…GDAG, and DGTP…IFAN.

The protein belongs to the WD repeat LIS1/nudF family. As to quaternary structure, self-associates. Interacts with NDL1 and dynein.

The protein localises to the cytoplasm. Its subcellular location is the cytoskeleton. It localises to the spindle pole. Its function is as follows. Positively regulates the activity of the minus-end directed microtubule motor protein dynein. May enhance dynein-mediated microtubule sliding by targeting dynein to the microtubule plus end. Required for nuclear migration during vegetative growth as well as development. Required for retrograde early endosome (EE) transport from the hyphal tip. Required for localization of dynein to the mitotic spindle poles. Recruits additional proteins to the dynein complex at SPBs. The protein is Nuclear distribution protein PAC1-2 of Podospora anserina (strain S / ATCC MYA-4624 / DSM 980 / FGSC 10383) (Pleurage anserina).